The chain runs to 334 residues: Protein RecA (334 aa).

65 to 72 (GNESSGKT) contributes to the ATP binding site.

It belongs to the RecA family.

It localises to the cytoplasm. In terms of biological role, can catalyze the hydrolysis of ATP in the presence of single-stranded DNA, the ATP-dependent uptake of single-stranded DNA by duplex DNA, and the ATP-dependent hybridization of homologous single-stranded DNAs. It interacts with LexA causing its activation and leading to its autocatalytic cleavage. The chain is Protein RecA from Ureaplasma parvum serovar 3 (strain ATCC 27815 / 27 / NCTC 11736).